A 1291-amino-acid chain; its full sequence is MTEKITLADALSNVEVLDELSLPDEQPCIEAQPCSIIYKANFDTNFEDRNGFVTGIAKYIEEATTHANLNVLLDEGQKHAVMLYTWRCCSRAIPQPKSNEQPNRVEIYEKTVEVLAPEVNKLLNFMYFQRKAIEAFSGEVKRLCHAEKRKDFVSEAYLLTLGKFINMFAVLDELKNMKSSVKNDYSTYRRAAQFLKVMSDSHTLQESQNLSMFLATQNKIRDTVKDTLEKIVGYEDLLSDVVNICVHMFETKMYLTPEEKHMLVKVMGFGLFLMDSDACNINKLDQKKKIRLDRIDRIFKNLEVVPLFGDMQIAPFNYIKRSKHFDSSKWPLSSSNAISPQADLMVHLPQIREDHVKYISELARYTNEVTTTVKENPSDAENRITADLALRGLQLLSEWTSVVTELYSWKLLHPTDHHQNKECPVEAEEYERATRYNYTSEEKFALIEVIAMIKGLQVLMARIETVLCEAIRRNIYSELQDFVQLSLREPLRKAVKNKKDLIRSIIMSVRETSADWQKGYEPTDDPVSKGKKDPDGGFRIHVPRLNVGPSSTQLYMVRTMLESLTADKSGGKRTLRKDIDGNCLMQIETFHNTSFYWSYLLNFSDTLQKCCDLSQLWYREFYLEMTMGRKVNKCMVRHQHNEECKDLITMEKRIQFPIEMSMPWILTDHILQTKEPSMMEFVLYPLDLYNDSAHYALTVFRKQFLYDEVEAEVNLCFDQFVYKLSEQIFAHYKQLAGSIFLDKRFRLECEVLGFNFQSYPRNNRYETLLKQRHVQLLGRSIDLNKLVTQRINANMHKSIELAISRFEANDITGIVELEGLLEANRICHKLLSKYLALDNFDGMVKEANHNVLAPYGRITLHVFVELNYDFLVNYCYNAATNRFIRTKVNLSSTQAIQREKPPQMSHYYLWGSKQLNAAYSTQYGQYTGFVGSPHFHAMCRLLGYQGIAVVMDIILKDIVKPLIQGSLLQFTKTLMIAMPKSCKLPRCEYGSPGVLSYYQAHLTDIVQYPDTKTELFQSFREFGNCIIFCLLIEQALSQEEVCDLLHAALFQNIFPRPFCKENEKPEAKQKRLEAQFANLQIVSNVEKIGTAKQAMIAREGDLLTRERLCCGLSIFEVILNRVKSYLDDPVWCGPPPANGIIHVDECSEFHRLWSALQFVYCIPVRGTEYTIEELFGEGLNWAGCVMIVLLGQQRRFEALDFCYHILRVQRVDGKDEDVKGIQLKRMVDRIRRFQVLNSQIFSILNKYLKGGDGEGSNVEHVRCFPPPQHPSVISSSSHYQDPQKLRQSMNN.

Positions H1269–N1291 are disordered. Residues S1271–N1291 show a composition bias toward polar residues.

The protein belongs to the CYFIP family. As to quaternary structure, interacts with Fmr1 and Rac1. Component of the WAVE complex composed of Hem/Kette, Scar/Wave and Cyfip where it binds through its C-terminus directly to Hem.

It localises to the cytoplasm. In terms of biological role, plays a role in guidance and morphology of central and peripheral axons and in synaptic morphology. Also required for formation of cell membrane protrusions and for bristle development. In Drosophila pseudoobscura pseudoobscura (Fruit fly), this protein is Cytoplasmic FMR1-interacting protein.